The chain runs to 200 residues: Small ribosomal subunit protein eS1 (200 aa).

It belongs to the eukaryotic ribosomal protein eS1 family.

The polypeptide is Small ribosomal subunit protein eS1 (Thermococcus gammatolerans (strain DSM 15229 / JCM 11827 / EJ3)).